Consider the following 151-residue polypeptide: Putative truncated GMC-type inactive oxidoreductase L893 (151 aa).

It belongs to the GMC oxidoreductase family.

It is found in the virion. The sequence is that of Putative truncated GMC-type inactive oxidoreductase L893 from Acanthamoeba polyphaga (Amoeba).